Reading from the N-terminus, the 395-residue chain is Sensor protein DltS (395 aa).

The next 2 membrane-spanning stretches (helical) occupy residues 9–29 (FVFLTMSILIVVVLFLFAVSN) and 136–156 (FLILVFTIFGFCLLAAVSLYL). Residues 177-387 (DASHELKTPI…RLEVQLPIDG (211 aa)) enclose the Histidine kinase domain. H180 bears the Phosphohistidine; by autocatalysis mark.

It localises to the cell membrane. The catalysed reaction is ATP + protein L-histidine = ADP + protein N-phospho-L-histidine.. In terms of biological role, member of the two-component regulatory system DltS/DltR. Regulates the expression of the dlt operon. Probably phosphorylates DltR. This chain is Sensor protein DltS (dltS), found in Streptococcus agalactiae serotype V (strain ATCC BAA-611 / 2603 V/R).